We begin with the raw amino-acid sequence, 211 residues long: Stromal cell-derived factor 2 (211 aa).

The signal sequence occupies residues 1-18 (MAVVSLLLFGGLWSAVGS). MIR domains are found at residues 21-75 (LAVV…IRGK), 83-138 (GTPI…VLCN), and 139-193 (GPYW…AMEG).

It is found in the secreted. The sequence is that of Stromal cell-derived factor 2 (SDF2) from Bos taurus (Bovine).